The primary structure comprises 415 residues: uncharacterized protein (415 aa).

In terms of domain architecture, TRAM spans 1-55 (MSTGTVTIDRLGAQGDGVARTEAGPVFAPFTLPGETVSLAVNKANGTLISLKEAS). [4Fe-4S] cluster contacts are provided by Cys63, Cys75, Cys78, and Cys152. S-adenosyl-L-methionine is bound by residues Gln252, Phe279, Glu299, and Asp347. Cys373 acts as the Nucleophile in catalysis.

It belongs to the class I-like SAM-binding methyltransferase superfamily. RNA M5U methyltransferase family.

This is an uncharacterized protein from Rhizobium meliloti (strain 1021) (Ensifer meliloti).